A 108-amino-acid chain; its full sequence is Phosphoribosyl-AMP cyclohydrolase (108 aa).

Residue Asp78 coordinates Mg(2+). Cys79 is a binding site for Zn(2+). Positions 80 and 82 each coordinate Mg(2+). Zn(2+) contacts are provided by Cys95 and Cys102.

It belongs to the PRA-CH family. As to quaternary structure, homodimer. The cofactor is Mg(2+). Requires Zn(2+) as cofactor.

Its subcellular location is the cytoplasm. The enzyme catalyses 1-(5-phospho-beta-D-ribosyl)-5'-AMP + H2O = 1-(5-phospho-beta-D-ribosyl)-5-[(5-phospho-beta-D-ribosylamino)methylideneamino]imidazole-4-carboxamide. Its pathway is amino-acid biosynthesis; L-histidine biosynthesis; L-histidine from 5-phospho-alpha-D-ribose 1-diphosphate: step 3/9. Its function is as follows. Catalyzes the hydrolysis of the adenine ring of phosphoribosyl-AMP. The protein is Phosphoribosyl-AMP cyclohydrolase of Nitrosopumilus maritimus (strain SCM1).